The primary structure comprises 115 residues: Large ribosomal subunit protein uL22 (115 aa).

It belongs to the universal ribosomal protein uL22 family. Part of the 50S ribosomal subunit.

Functionally, this protein binds specifically to 23S rRNA; its binding is stimulated by other ribosomal proteins, e.g. L4, L17, and L20. It is important during the early stages of 50S assembly. It makes multiple contacts with different domains of the 23S rRNA in the assembled 50S subunit and ribosome. The globular domain of the protein is located near the polypeptide exit tunnel on the outside of the subunit, while an extended beta-hairpin is found that lines the wall of the exit tunnel in the center of the 70S ribosome. This chain is Large ribosomal subunit protein uL22, found in Thioalkalivibrio sulfidiphilus (strain HL-EbGR7).